Reading from the N-terminus, the 474-residue chain is Ribulose bisphosphate carboxylase large chain (474 aa).

Substrate is bound by residues asparagine 122 and threonine 172. Lysine 174 serves as the catalytic Proton acceptor. Residue lysine 176 participates in substrate binding. Mg(2+) is bound by residues lysine 200, aspartate 202, and glutamate 203. N6-carboxylysine is present on lysine 200. Catalysis depends on histidine 293, which acts as the Proton acceptor. Substrate-binding residues include arginine 294, histidine 326, and serine 378.

The protein belongs to the RuBisCO large chain family. Type I subfamily. As to quaternary structure, heterohexadecamer of 8 large chains and 8 small chains; disulfide-linked. The disulfide link is formed within the large subunit homodimers. The cofactor is Mg(2+). The disulfide bond which can form in the large chain dimeric partners within the hexadecamer appears to be associated with oxidative stress and protein turnover.

Its subcellular location is the carboxysome. It catalyses the reaction 2 (2R)-3-phosphoglycerate + 2 H(+) = D-ribulose 1,5-bisphosphate + CO2 + H2O. The enzyme catalyses D-ribulose 1,5-bisphosphate + O2 = 2-phosphoglycolate + (2R)-3-phosphoglycerate + 2 H(+). In terms of biological role, ruBisCO catalyzes two reactions: the carboxylation of D-ribulose 1,5-bisphosphate, the primary event in carbon dioxide fixation, as well as the oxidative fragmentation of the pentose substrate in the photorespiration process. Both reactions occur simultaneously and in competition at the same active site. The chain is Ribulose bisphosphate carboxylase large chain from Synechococcus sp. (strain JA-2-3B'a(2-13)) (Cyanobacteria bacterium Yellowstone B-Prime).